A 724-amino-acid polypeptide reads, in one-letter code: NAD(+) hydrolase SARM1 (724 aa).

Residues 1 to 27 constitute a mitochondrion transit peptide; it reads MVLTLLFSAYKLCRFFTMSGPRPGADR. Positions 24 to 56 are disordered; the sequence is GADRLTVPGPDRSGGASPWWAAGGRGSREVSPG. Over residues 36–45 the composition is skewed to low complexity; that stretch reads SGGASPWWAA. The stretch at 60–100 is one ARM 1 repeat; it reads EVQGALERSLPELQQALSELKQASAARAVGAGLAEVFQLVE. Residues Trp103, Arg110, 149-157, and 190-193 contribute to the NAD(+) site; these read EQILVAENR and HMFK. ARM repeat units follow at residues 114-153, 155-193, 196-235, 237-280, 281-314, 315-354, and 359-402; these read QGLCDAIRLDGGLDLLLRLLQAPELETRVQAARLLEQILV, ENRDRVARIGLGVILNLAKEREPVELARSVAGILEHMFK, EETCQRLVAAGGLDAVLYWCRRTDPALLRHCALALANCAL, GGQT…LATN, KEVEREVEHSGTLALVEPLVASLDPGRFARCLVD, ASDTSQGRGPDDLQSLVLLLDSSRLEAQCIGAFYLCAEAA, and QGKT…EEVP. 2 consecutive SAM domains span residues 412-476 and 486-548; these read WKEA…LKTF and NLAD…MLHS. Phosphoserine occurs at positions 548 and 558. Residues 560–703 enclose the TIR domain; that stretch reads DTPDVFISYR…KIIRFLQGRP (144 aa). Residues 569–570 and Glu599 each bind NAD(+); that span reads RR. The active site involves Glu642. A compositionally biased stretch (polar residues) spans 703-716; sequence PSQDSSAGSDTSLE. The tract at residues 703–724 is disordered; it reads PSQDSSAGSDTSLEGATPMGLP.

The protein belongs to the SARM1 family. Homooctamer; forms an octameric ring via SAM domains. Interacts with TICAM1/TRIF and thereby interferes with TICAM1/TRIF function. Interacts with SDC2 (via cytoplasmic domain) and MAPK10/JNK3. Phosphorylation at Ser-548 by JNK kinases (MAPK8, MAPK9 and /or MAPK10) enhance the NAD(+) hydrolase (NADase) activity. Phosphorylation at Ser-548 and subsequent activation takes place in response to oxidative stress conditions and inhibits mitochondrial respiration. In terms of tissue distribution, widely expressed in the brain and neurons (at protein level). Expressed in photoreceptor cells of the neural retina.

It localises to the cytoplasm. The protein localises to the cell projection. The protein resides in the axon. It is found in the dendrite. Its subcellular location is the synapse. It localises to the mitochondrion. It catalyses the reaction NAD(+) + H2O = ADP-D-ribose + nicotinamide + H(+). The catalysed reaction is NAD(+) = cyclic ADP-beta-D-ribose + nicotinamide + H(+). It carries out the reaction NADP(+) + H2O = ADP-D-ribose 2'-phosphate + nicotinamide + H(+). Its activity is regulated as follows. Autoinhibited: in the inactive state, the enzymatic TIR domain is held apart by the autoinhibiting ARM repeats. NAD(+)-binding to ARM repeats maintains an inactive state by promoting interaction between ARM repeats and the TIR domain, thereby facilitating inhibition of the enzymatic TIR domain. Following activation, possibly by nicotinamide mononucleotide (NMN), auto-inhibitory interactions are released, allowing self-association of the TIR domains and subsequent activation of the NAD(+) hydrolase (NADase) activity. Self-association of TIR domains is facilitated by the octamer of SAM domains. In terms of biological role, NAD(+) hydrolase, which plays a key role in axonal degeneration following injury by regulating NAD(+) metabolism. Acts as a negative regulator of MYD88- and TRIF-dependent toll-like receptor signaling pathway by promoting Wallerian degeneration, an injury-induced form of programmed subcellular death which involves degeneration of an axon distal to the injury site. Wallerian degeneration is triggered by NAD(+) depletion: in response to injury, SARM1 is activated and catalyzes cleavage of NAD(+) into ADP-D-ribose (ADPR), cyclic ADPR (cADPR) and nicotinamide; NAD(+) cleavage promoting cytoskeletal degradation and axon destruction. Also able to hydrolyze NADP(+), but not other NAD(+)-related molecules. Can activate neuronal cell death in response to stress. Regulates dendritic arborization through the MAPK4-JNK pathway. Involved in innate immune response: inhibits both TICAM1/TRIF- and MYD88-dependent activation of JUN/AP-1, TRIF-dependent activation of NF-kappa-B and IRF3, and the phosphorylation of MAPK14/p38. This is NAD(+) hydrolase SARM1 from Mus musculus (Mouse).